The sequence spans 244 residues: tRNA pseudouridine synthase B (244 aa).

Catalysis depends on D46, which acts as the Nucleophile.

This sequence belongs to the pseudouridine synthase TruB family. Type 1 subfamily.

It catalyses the reaction uridine(55) in tRNA = pseudouridine(55) in tRNA. Responsible for synthesis of pseudouridine from uracil-55 in the psi GC loop of transfer RNAs. The sequence is that of tRNA pseudouridine synthase B from Bordetella parapertussis (strain 12822 / ATCC BAA-587 / NCTC 13253).